The primary structure comprises 172 residues: NADH-ubiquinone oxidoreductase chain 6 (172 aa).

The next 5 helical transmembrane spans lie at 1–21, 27–47, 48–68, 87–107, and 138–158; these read MTYF…AVAS, YGVV…LSLG, ISFV…VVFV, VVGY…VGGF, and CGVG…FVVL.

The protein belongs to the complex I subunit 6 family.

It is found in the mitochondrion membrane. The catalysed reaction is a ubiquinone + NADH + 5 H(+)(in) = a ubiquinol + NAD(+) + 4 H(+)(out). Core subunit of the mitochondrial membrane respiratory chain NADH dehydrogenase (Complex I) that is believed to belong to the minimal assembly required for catalysis. Complex I functions in the transfer of electrons from NADH to the respiratory chain. The immediate electron acceptor for the enzyme is believed to be ubiquinone. The protein is NADH-ubiquinone oxidoreductase chain 6 (MT-ND6) of Uria aalge (Common mure).